A 561-amino-acid chain; its full sequence is Putative periplasmic trehalase (561 aa).

The N-terminal stretch at 1–30 is a signal peptide; that stretch reads MKSPAPSRPQKMALIPACIFLCFAALSVQA. Residues arginine 148, 155-156, asparagine 192, 201-203, 273-275, and glycine 306 each bind substrate; these read WD, RSQ, and RPE. Catalysis depends on proton donor/acceptor residues aspartate 308 and glutamate 492. Glutamate 507 serves as a coordination point for substrate. A disordered region spans residues 535 to 561; that stretch reads CDNVPATRPLSESTTQPVKQKEAEPTP.

It belongs to the glycosyl hydrolase 37 family. As to quaternary structure, monomer.

The protein resides in the periplasm. It carries out the reaction alpha,alpha-trehalose + H2O = alpha-D-glucose + beta-D-glucose. Functionally, provides the cells with the ability to utilize trehalose at high osmolarity by splitting it into glucose molecules that can subsequently be taken up by the phosphotransferase-mediated uptake system. This is Putative periplasmic trehalase from Escherichia coli O157:H7.